The following is a 248-amino-acid chain: ATP synthase subunit a, chloroplastic (248 aa).

Helical transmembrane passes span 39–59 (QVLITSWVVIAILLGSSILAV), 96–116 (VPFIGTLFLFIFVSNWSGALF), 135–155 (INTTVALALLTSVAYFYAGLT), 200–220 (LVVVVLLSLVPLVVPIPVMFL), and 221–241 (GLFTSGIQALIFATLAAAYIG).

It belongs to the ATPase A chain family. In terms of assembly, F-type ATPases have 2 components, CF(1) - the catalytic core - and CF(0) - the membrane proton channel. CF(1) has five subunits: alpha(3), beta(3), gamma(1), delta(1), epsilon(1). CF(0) has four main subunits: a, b, b' and c.

The protein localises to the plastid. Its subcellular location is the chloroplast thylakoid membrane. Its function is as follows. Key component of the proton channel; it plays a direct role in the translocation of protons across the membrane. This Pelargonium hortorum (Common geranium) protein is ATP synthase subunit a, chloroplastic.